The primary structure comprises 100 residues: NADH-quinone oxidoreductase subunit K (100 aa).

A run of 3 helical transmembrane segments spans residues 1–21 (MIGL…GLAG), 28–48 (ILLL…GFVA), and 64–84 (FIIA…ILWF).

The protein belongs to the complex I subunit 4L family. NDH-1 is composed of 14 different subunits. Subunits NuoA, H, J, K, L, M, N constitute the membrane sector of the complex.

Its subcellular location is the cell inner membrane. The catalysed reaction is a quinone + NADH + 5 H(+)(in) = a quinol + NAD(+) + 4 H(+)(out). NDH-1 shuttles electrons from NADH, via FMN and iron-sulfur (Fe-S) centers, to quinones in the respiratory chain. The immediate electron acceptor for the enzyme in this species is believed to be ubiquinone. Couples the redox reaction to proton translocation (for every two electrons transferred, four hydrogen ions are translocated across the cytoplasmic membrane), and thus conserves the redox energy in a proton gradient. The chain is NADH-quinone oxidoreductase subunit K from Helicobacter pylori (strain P12).